We begin with the raw amino-acid sequence, 689 residues long: Glycine--tRNA ligase beta subunit (689 aa).

The protein belongs to the class-II aminoacyl-tRNA synthetase family. As to quaternary structure, tetramer of two alpha and two beta subunits.

It localises to the cytoplasm. It catalyses the reaction tRNA(Gly) + glycine + ATP = glycyl-tRNA(Gly) + AMP + diphosphate. The sequence is that of Glycine--tRNA ligase beta subunit from Coxiella burnetii (strain Dugway 5J108-111).